A 106-amino-acid chain; its full sequence is uncharacterized protein (106 aa).

2 consecutive transmembrane segments (helical) span residues 25–45 (VMNV…IHYI) and 62–82 (ICFL…NFQG).

It is found in the membrane. This is an uncharacterized protein from Saccharomyces cerevisiae (strain ATCC 204508 / S288c) (Baker's yeast).